We begin with the raw amino-acid sequence, 173 residues long: NADH-ubiquinone oxidoreductase chain 6 (173 aa).

5 helical membrane passes run 1–21, 27–47, 48–68, 87–107, and 139–159; these read MTYF…AVAS, YGVV…LSLG, ISFV…VVFV, VIGY…IGGF, and CGVG…FVVL.

It belongs to the complex I subunit 6 family.

It localises to the mitochondrion membrane. The catalysed reaction is a ubiquinone + NADH + 5 H(+)(in) = a ubiquinol + NAD(+) + 4 H(+)(out). Functionally, core subunit of the mitochondrial membrane respiratory chain NADH dehydrogenase (Complex I) that is believed to belong to the minimal assembly required for catalysis. Complex I functions in the transfer of electrons from NADH to the respiratory chain. The immediate electron acceptor for the enzyme is believed to be ubiquinone. In Alca torda (Razorbill), this protein is NADH-ubiquinone oxidoreductase chain 6 (MT-ND6).